The chain runs to 1132 residues: Telomerase reverse transcriptase (1132 aa).

The interval 1–230 (MPRAPRCRAV…ARRRGGSASR (230 aa)) is RNA-interacting domain 1. The segment at 58–197 (VPWDARPPPA…PHASGPRRRL (140 aa)) is GQ motif. Positions 137–141 (WGLLL) are required for regulating specificity for telomeric DNA and for processivity for primer elongation. Residues 210–320 (AGVPLGLPAP…SRPPRPWDTP (111 aa)) are disordered. Residues 213-234 (PLGLPAPGARRRGGSASRSLPL) show a composition bias toward low complexity. Positions 222-240 (RRRGGSASRSLPLPKRPRR) match the Bipartite nuclear localization signal motif. A Phosphoserine; by PKB/AKT1 modification is found at Ser227. Positions 231–324 (SLPLPKRPRR…RPWDTPCPPV (94 aa)) are linker. The span at 293-304 (RHSHPSVGRQHH) shows a compositional bias: basic residues. The required for oligomerization stretch occupies residues 301-538 (RQHHAGPPST…VPAAEHRLRE (238 aa)). A compositionally biased stretch (pro residues) spans 310–320 (TSRPPRPWDTP). An RNA-interacting domain 2 region spans residues 325–550 (YAETKHFLYS…LAKFLHWLMS (226 aa)). Positions 328–333 (TKHFLY) match the TFLY; involved in RNA binding motif. Residues 376–521 (PRRLPRLPQR…MSVRDCAWLR (146 aa)) are QFP motif. The tract at residues 397-417 (LGNHAQCPYGVLLKTHCPLRA) is CP motif. A Phosphoserine; by DYRK2 modification is found at Ser457. The Reverse transcriptase domain occupies 605–935 (EVRQHREARP…GLFPWCGLLL (331 aa)). Tyr707 is modified (phosphotyrosine; by SRC-type Tyr-kinases). Mg(2+) is bound by residues Asp712, Asp868, and Asp869. Residues 914–928 (LGGTAFVQMPAHGLF) are required for oligomerization. Positions 930–934 (WCGLL) are primer grip sequence. The segment at 936–1132 (DTRTLEVQSD…LPSDFKTILD (197 aa)) is CTE.

It belongs to the reverse transcriptase family. Telomerase subfamily. Catalytic component of the telomerase holoenzyme complex composed of one molecule of TERT, one molecule of WRAP53/TCAB1, two molecules of H/ACA ribonucleoprotein complex subunits DKC1, NOP10, NHP2 and GAR1, and a telomerase RNA template component (TERC). The telomerase holoenzyme complex is associated with TEP1, SMG6/EST1A and POT1. The molecular chaperone HSP90/P23 complex is required for correct assembly and stabilization of the active telomerase. Interacts directly with HSP90A and PTGES3. Interacts with HSPA1A; the interaction occurs in the absence of TERC and dissociates once the complex has formed. Interacts with RAN; the interaction promotes nuclear export of TERT. Interacts with XPO1. Interacts with PTPN11; the interaction retains TERT in the nucleus. Interacts with NCL (via RRM1 and C-terminal RRM4/Arg/Gly-rich domains); the interaction is important for nucleolar localization of TERT. Interacts with SMARCA4 (via the bromodomain); the interaction regulates Wnt-mediated signaling. Interacts with MCRS1 (isoform MCRS2); the interaction inhibits in vitro telomerase activity. Interacts with PIF1; the interaction has no effect on the elongation activity of TERT. Interacts with PML; the interaction recruits TERT to PML bodies and inhibits telomerase activity. Interacts with GNL3L. Interacts with isoform 1 and isoform 2 of NVL. Interacts with DHX36. Interacts with ATF7. Phosphorylation at Tyr-707 under oxidative stress leads to translocation of TERT to the cytoplasm and reduces its antiapoptotic activity. Dephosphorylated by SHP2/PTPN11 leading to nuclear retention. Phosphorylation at Ser-227 by the AKT pathway promotes nuclear location. Phosphorylation at the G2/M phase at Ser-457 by DYRK2 promotes ubiquitination by the EDVP complex and degradation. In terms of processing, ubiquitinated by the EDVP complex, a E3 ligase complex following phosphorylation at Ser-457 by DYRK2. Ubiquitinated leads to proteasomal degradation. Post-translationally, (Microbial infection) In case of infection by HIV-1, the EDVP complex is hijacked by HIV-1 via interaction between HIV-1 Vpr and DCAF1/VPRBP, leading to ubiquitination and degradation. Expressed at a high level in thymocyte subpopulations, at an intermediate level in tonsil T-lymphocytes, and at a low to undetectable level in peripheral blood T-lymphocytes.

Its subcellular location is the nucleus. It localises to the nucleolus. It is found in the nucleoplasm. The protein localises to the chromosome. The protein resides in the telomere. Its subcellular location is the cytoplasm. It localises to the PML body. It catalyses the reaction DNA(n) + a 2'-deoxyribonucleoside 5'-triphosphate = DNA(n+1) + diphosphate. In terms of biological role, telomerase is a ribonucleoprotein enzyme essential for the replication of chromosome termini in most eukaryotes. Active in progenitor and cancer cells. Inactive, or very low activity, in normal somatic cells. Catalytic component of the teleromerase holoenzyme complex whose main activity is the elongation of telomeres by acting as a reverse transcriptase that adds simple sequence repeats to chromosome ends by copying a template sequence within the RNA component of the enzyme. Catalyzes the RNA-dependent extension of 3'-chromosomal termini with the 6-nucleotide telomeric repeat unit, 5'-TTAGGG-3'. The catalytic cycle involves primer binding, primer extension and release of product once the template boundary has been reached or nascent product translocation followed by further extension. More active on substrates containing 2 or 3 telomeric repeats. Telomerase activity is regulated by a number of factors including telomerase complex-associated proteins, chaperones and polypeptide modifiers. Modulates Wnt signaling. Plays important roles in aging and antiapoptosis. The protein is Telomerase reverse transcriptase (TERT) of Homo sapiens (Human).